The chain runs to 1070 residues: DNA-directed RNA polymerase subunit beta (1070 aa).

It belongs to the RNA polymerase beta chain family. As to quaternary structure, in plastids the minimal PEP RNA polymerase catalytic core is composed of four subunits: alpha, beta, beta', and beta''. When a (nuclear-encoded) sigma factor is associated with the core the holoenzyme is formed, which can initiate transcription.

It is found in the plastid. The protein localises to the chloroplast. The enzyme catalyses RNA(n) + a ribonucleoside 5'-triphosphate = RNA(n+1) + diphosphate. In terms of biological role, DNA-dependent RNA polymerase catalyzes the transcription of DNA into RNA using the four ribonucleoside triphosphates as substrates. The sequence is that of DNA-directed RNA polymerase subunit beta from Cucumis sativus (Cucumber).